The following is a 348-amino-acid chain: MSIPETQKGVIFYESHGKLEYKDIPVPKPKANELLINVKYSGVCHTDLHAWHGDWPLPVKLPLVGGHEGAGVVVGMGENVKGWKIGDYAGIKWLNGSCMACEYCELGNESNCPHADLSGYTHDGSFQQYATADAVQAAHIPQGTDLAQVAPILCAGITVYKALKSANLMAGHWVAISGAAGGLGSLAVQYAKAMGYRVLGIDGGEGKEELFRSIGGEVFIDFTKEKDIVGAVLKATDGGAHGVINVSVSEAAIEASTRYVRANGTTVLVGMPAGAKCCSDVFNQVVKSISIVGSYVGNRADTREALDFFARGLVKSPIKVVGLSTLPEIYEKMEKGQIVGRYVVDTSK.

Ser-2 is modified (N-acetylserine). Position 44 (Cys-44) interacts with Zn(2+). NAD(+) contacts are provided by His-45, Thr-46, and His-49. The Zn(2+) site is built by His-67, Glu-68, Cys-98, Cys-101, Cys-104, Cys-112, and Cys-154. Residues Gly-181, Gly-182, Leu-183, Asp-202, and Lys-207 each contribute to the NAD(+) site. Ser-213 carries the phosphoserine modification. Residue Phe-222 coordinates NAD(+). Thr-223 is subject to Phosphothreonine. Residues Lys-226 and Lys-234 each participate in a glycyl lysine isopeptide (Lys-Gly) (interchain with G-Cter in ubiquitin) cross-link. The NAD(+) site is built by Val-269 and Met-271. Ser-279 bears the Phosphoserine mark. Lys-287 is covalently cross-linked (Glycyl lysine isopeptide (Lys-Gly) (interchain with G-Cter in ubiquitin)). The NAD(+) site is built by Ser-294 and Val-296. Position 316 is a phosphoserine (Ser-316). A Glycyl lysine isopeptide (Lys-Gly) (interchain with G-Cter in ubiquitin) cross-link involves residue Lys-319. NAD(+) is bound at residue Arg-341.

It belongs to the zinc-containing alcohol dehydrogenase family. As to quaternary structure, homotetramer. It depends on Zn(2+) as a cofactor.

The protein localises to the cytoplasm. The catalysed reaction is a primary alcohol + NAD(+) = an aldehyde + NADH + H(+). The enzyme catalyses a secondary alcohol + NAD(+) = a ketone + NADH + H(+). It catalyses the reaction ethanol + NAD(+) = acetaldehyde + NADH + H(+). It carries out the reaction allyl alcohol + NADP(+) = acrolein + NADPH + H(+). The catalysed reaction is 1-propanol + NAD(+) = propanal + NADH + H(+). The enzyme catalyses butan-1-ol + NAD(+) = butanal + NADH + H(+). It catalyses the reaction hexan-1-ol + NAD(+) = hexanal + NADH + H(+). It carries out the reaction (R)-lactaldehyde + NAD(+) = methylglyoxal + NADH + H(+). The catalysed reaction is octan-1-ol + NAD(+) = octanal + NADH + H(+). The enzyme catalyses butan-2-ol + NAD(+) = butan-2-one + NADH + H(+). It catalyses the reaction propan-2-ol + NAD(+) = acetone + NADH + H(+). It carries out the reaction isobutanol + NAD(+) = 2-methylpropanal + NADH + H(+). Its function is as follows. Preferentially fermentative isozyme that reduces acetaldehyde to ethanol during the fermentation of glucose. Major enzyme required for the conversion of acetaldehyde to ethanol. Plays a key role in the carbohydrate metabolism through the regeneration of NAD(+) from glycolytic NADH. In the reverse reaction, preferentially catalyzes the conversion of primary unbranched alcohols to their corresponding aldehydes. Also shows activity toward secondary alcohols. Most active with ethanol, and its activity decreases as the size of the alcohol is increased. This is Alcohol dehydrogenase 1 (ADH1) from Saccharomyces cerevisiae (strain ATCC 204508 / S288c) (Baker's yeast).